The following is a 558-amino-acid chain: Protein OS-9 homolog (558 aa).

The N-terminal stretch at 1–17 (MLLKSLALIASSSLAAT) is a signal peptide. An N-linked (GlcNAc...) asparagine glycan is attached at Asn-68. The 127-residue stretch at 111–237 (GDCLFYEQGF…QVGTPRLCKD (127 aa)) folds into the MRH domain. A disulfide bridge connects residues Cys-113 and Cys-126. A mannooligosaccharide derivative is bound by residues Gln-133, Arg-197, Glu-219, and Tyr-225. Cystine bridges form between Cys-190/Cys-223 and Cys-205/Cys-235. Disordered stretches follow at residues 435-508 (SKKL…DEDE) and 539-558 (KDLA…GLSD). Over residues 441–466 (KKEAASTKREEAKKQVEASVEEKAVD) the composition is skewed to basic and acidic residues. Positions 474–492 (DTVTSTQTFFRTQTLSTAE) are enriched in polar residues. Residues 543–558 (DKEDDDDDYEDYGLSD) show a composition bias toward acidic residues.

The protein belongs to the OS-9 family. In terms of assembly, interacts with missfolded ER lumenal proteins.

Its subcellular location is the endoplasmic reticulum membrane. Its function is as follows. Lectin involved in the quality control of the secretory pathway. As a member of the endoplasmic reticulum-associated degradation lumenal (ERAD-L) surveillance system, targets misfolded endoplasmic reticulum lumenal glycoproteins for degradation. This chain is Protein OS-9 homolog (YOS9), found in Yarrowia lipolytica (strain CLIB 122 / E 150) (Yeast).